A 1049-amino-acid chain; its full sequence is Desmoglein-1 (1049 aa).

Residues 1–23 (MDWSFFRVVAMLFIFLVVVEVNS) form the signal peptide. The propeptide occupies 24-49 (EFRIQVRDYNTKNGTIKWHSIRRQKR). N-linked (GlcNAc...) asparagine glycosylation is found at Asn-36, Asn-110, and Asn-180. 4 consecutive Cadherin domains span residues 50-158 (EWIK…PVFS), 159-270 (MATF…PYME), 271-385 (QSSY…GPVF), and 386-497 (RPGS…TEPN). Residues 50–548 (EWIKFAAACR…LLSDNVHFGP (499 aa)) lie on the Extracellular side of the membrane. Positions 485–534 (SFGNDDRTNTEPNTKITTNTGRQESTSSTNYDTSTTSTDSSQVYSSEPGN) are disordered. Residues 494-508 (TEPNTKITTNTGRQE) are compositionally biased toward polar residues. The span at 509 to 530 (STSSTNYDTSTTSTDSSQVYSS) shows a compositional bias: low complexity. The chain crosses the membrane as a helical span at residues 549–569 (AGIGLLIMGFLVLGLVPFLMI). Residues 570–1049 (CCDCGGAPRS…TKYSTVQYSK (480 aa)) lie on the Cytoplasmic side of the membrane. Position 579 is a phosphoserine (Ser-579). 5 Desmoglein repeat repeats span residues 813-839 (TYPSGPGVLHPKPILDPLGYGNVTVTE), 840-869 (SYTTSDTLKPSVHVHDNRPASNVVVTERVV), 870-899 (GPISGADLHGMLEMPDLRDGSNVIVTERVI), 900-927 (APSSSLPTSLTIHHPRESSNVVVTERVI), and 928-956 (QPTSGMIGSLSMHPELANAHNVIVTERVV). A disordered region spans residues 1014–1035 (HMRSSSDHHFNQTIGSASPSTA). Residues 1024–1035 (NQTIGSASPSTA) are compositionally biased toward polar residues.

In terms of assembly, binds to JUP/plakoglobin. Interacts with PKP2. Interacts with DSC3; there is evidence to suggest that the interaction promotes cell-cell adhesion of keratinocytes. (Microbial infection) Interacts with Staphylococcus aureus protein SdrD; this interaction increases S.aureus adherence to keratinocytes. In terms of tissue distribution, expressed in all suprabasal layers of the epidermis, with the highest expression seen in the granular layer (at protein level).

The protein resides in the cell membrane. It localises to the cell junction. The protein localises to the desmosome. Its subcellular location is the cytoplasm. It is found in the nucleus. In terms of biological role, component of intercellular desmosome junctions. Involved in the interaction of plaque proteins and intermediate filaments mediating cell-cell adhesion. In Homo sapiens (Human), this protein is Desmoglein-1 (DSG1).